The following is a 344-amino-acid chain: Tripartite motif-containing protein 44 (344 aa).

Disordered regions lie at residues methionine 1–glutamate 25 and alanine 66–proline 165. Residues glycine 75–glutamate 92 show a composition bias toward basic and acidic residues. Over residues serine 93 to proline 165 the composition is skewed to acidic residues. The B box-type zinc finger occupies valine 174 to leucine 215. The Zn(2+) site is built by cysteine 179, histidine 182, cysteine 201, and histidine 207. Positions alanine 290–glutamate 325 form a coiled coil. The disordered stretch occupies residues glutamine 309–threonine 344. The span at glycine 330–threonine 344 shows a compositional bias: acidic residues. A phosphoserine mark is found at serine 336 and serine 339.

Interacts (via coiled coil) with TRIM17 (via coiled coil). Highly expressed in testis.

In terms of biological role, may play a role in the process of differentiation and maturation of neuronal cells. May regulate the activity of TRIM17. Is a negative regulator of PAX6 expression. In Homo sapiens (Human), this protein is Tripartite motif-containing protein 44 (TRIM44).